The following is a 354-amino-acid chain: tRNA-specific 2-thiouridylase MnmA (354 aa).

Residues 6-13 (LLSGGVDS) and Leu33 contribute to the ATP site. The active-site Nucleophile is Cys100. Cys100 and Cys195 are disulfide-bonded. An ATP-binding site is contributed by Gly123. The interval 145–147 (KDQ) is interaction with tRNA. The Cysteine persulfide intermediate role is filled by Cys195.

The protein belongs to the MnmA/TRMU family.

It is found in the cytoplasm. It carries out the reaction S-sulfanyl-L-cysteinyl-[protein] + uridine(34) in tRNA + AH2 + ATP = 2-thiouridine(34) in tRNA + L-cysteinyl-[protein] + A + AMP + diphosphate + H(+). Its function is as follows. Catalyzes the 2-thiolation of uridine at the wobble position (U34) of tRNA, leading to the formation of s(2)U34. This Borrelia duttonii (strain Ly) protein is tRNA-specific 2-thiouridylase MnmA.